A 472-amino-acid polypeptide reads, in one-letter code: 3-isopropylmalate dehydratase large subunit (472 aa).

Cys352, Cys413, and Cys416 together coordinate [4Fe-4S] cluster.

Belongs to the aconitase/IPM isomerase family. LeuC type 1 subfamily. In terms of assembly, heterodimer of LeuC and LeuD. The cofactor is [4Fe-4S] cluster.

It carries out the reaction (2R,3S)-3-isopropylmalate = (2S)-2-isopropylmalate. It participates in amino-acid biosynthesis; L-leucine biosynthesis; L-leucine from 3-methyl-2-oxobutanoate: step 2/4. Functionally, catalyzes the isomerization between 2-isopropylmalate and 3-isopropylmalate, via the formation of 2-isopropylmaleate. This Pseudomonas fluorescens (strain ATCC BAA-477 / NRRL B-23932 / Pf-5) protein is 3-isopropylmalate dehydratase large subunit.